Consider the following 312-residue polypeptide: Malate dehydrogenase (312 aa).

NAD(+) contacts are provided by residues 7 to 13 (GAAGGIG) and Asp34. Residues Arg81 and Arg87 each contribute to the substrate site. Residues Asn94 and 117 to 119 (ITN) each bind NAD(+). Substrate-binding residues include Asn119 and Arg153. The active-site Proton acceptor is His177. Met227 is a binding site for NAD(+).

This sequence belongs to the LDH/MDH superfamily. MDH type 1 family. In terms of assembly, homodimer.

It carries out the reaction (S)-malate + NAD(+) = oxaloacetate + NADH + H(+). Catalyzes the reversible oxidation of malate to oxaloacetate. The chain is Malate dehydrogenase from Escherichia coli (strain ATCC 8739 / DSM 1576 / NBRC 3972 / NCIMB 8545 / WDCM 00012 / Crooks).